Here is a 377-residue protein sequence, read N- to C-terminus: Nitric oxide reductase FlRd-NAD(+) reductase (377 aa).

The protein belongs to the FAD-dependent oxidoreductase family. The cofactor is FAD.

It is found in the cytoplasm. The enzyme catalyses 2 reduced [nitric oxide reductase rubredoxin domain] + NAD(+) + H(+) = 2 oxidized [nitric oxide reductase rubredoxin domain] + NADH. The protein operates within nitrogen metabolism; nitric oxide reduction. Functionally, one of at least two accessory proteins for anaerobic nitric oxide (NO) reductase. Reduces the rubredoxin moiety of NO reductase. The sequence is that of Nitric oxide reductase FlRd-NAD(+) reductase from Enterobacter sp. (strain 638).